The sequence spans 453 residues: Verruculogen prenyltransferase (453 aa).

Glutamate 89 serves as a coordination point for substrate. 8 residues coordinate dimethylallyl diphosphate: arginine 102, lysine 194, tyrosine 196, lysine 273, tyrosine 275, tyrosine 378, tyrosine 443, and tyrosine 447.

Belongs to the tryptophan dimethylallyltransferase family.

The enzyme catalyses verruculogen + dimethylallyl diphosphate = fumitremorgin A + diphosphate. Its pathway is mycotoxin biosynthesis. Functionally, verruculogen prenyltransferase; part of the gene cluster that mediates the biosynthesis of fumitremorgins, indole alkaloids that carry not only intriguing chemical structures, but also interesting biological and pharmacological activities. The biosynthesis of fumitremorgin-type alkaloids begins by condensation of the two amino acids L-tryptophan and L-proline to brevianamide F, catalyzed by the non-ribosomal peptide synthetase ftmPS/ftmA. Brevianamide F is then prenylated by the prenyltransferase ftmPT1/ftmB in the presence of dimethylallyl diphosphate, resulting in the formation of tryprostatin B. The three cytochrome P450 monooxygenases, ftmP450-1/ftmC, ftmP450-2/ftmE and ftmP450-3/FtmG, are responsible for the conversion of tryprostatin B to 6-hydroxytryprostatin B, tryprostatin A to fumitremorgin C and fumitremorgin C to 12,13-dihydroxyfumitremorgin C, respectively. The putative methyltransferase ftmMT/ftmD is expected for the conversion of 6-hydroxytryprostatin B to tryprostatin A. FtmPT2/FtmH catalyzes the prenylation of 12,13-dihydroxyfumitre-morgin C in the presence of dimethylallyl diphosphate, resulting in the formation of fumitremorgin B. Fumitremorgin B is further converted to verruculogen by ftmOx1/ftmF via the insertion of an endoperoxide bond between the two prenyl moieties. Finally, verruculogen is further converted to fumitremorgin A by the verruculogen prenyltransferase ftmPT3. This is Verruculogen prenyltransferase from Neosartorya fischeri (strain ATCC 1020 / DSM 3700 / CBS 544.65 / FGSC A1164 / JCM 1740 / NRRL 181 / WB 181) (Aspergillus fischerianus).